We begin with the raw amino-acid sequence, 67 residues long: Beta-defensin 123 (67 aa).

A signal peptide spans 1-20 (MKLLLLTLTVLLLLSQLTPG). Cystine bridges form between Cys-25-Cys-52, Cys-32-Cys-46, and Cys-36-Cys-53.

This sequence belongs to the beta-defensin family. As to expression, abundant expression in the male reproductive tract only. Expressed abundantly in testis, while expression in epididymis decreased gradually from caput to cauda.

It is found in the secreted. Its function is as follows. Has antibacterial activity. This is Beta-defensin 123 (DEFB123) from Macaca mulatta (Rhesus macaque).